The primary structure comprises 642 residues: Chaperone protein DnaK (642 aa).

Threonine 200 bears the Phosphothreonine; by autocatalysis mark. A compositionally biased stretch (low complexity) spans 600–616; that stretch reads EAAQQSAGAAGPMPGAP. The interval 600 to 642 is disordered; that stretch reads EAAQQSAGAAGPMPGAPAEEEPSDGPRKAKGRVVDAEIVDDDK. The segment covering 623–634 has biased composition (basic and acidic residues); the sequence is DGPRKAKGRVVD.

This sequence belongs to the heat shock protein 70 family.

Acts as a chaperone. The chain is Chaperone protein DnaK from Akkermansia muciniphila (strain ATCC BAA-835 / DSM 22959 / JCM 33894 / BCRC 81048 / CCUG 64013 / CIP 107961 / Muc).